The sequence spans 222 residues: Transcriptional regulatory protein BasR (222 aa).

One can recognise a Response regulatory domain in the interval 2-116 (KILIVEDDTL…ELHARIRALL (115 aa)). Residue aspartate 51 is modified to 4-aspartylphosphate. The ompR/PhoB-type DNA-binding region spans 124–218 (ESELIVGNLT…VRGFGYMLVA (95 aa)).

In terms of assembly, homodimer. Phosphorylated by BasS.

The protein localises to the cytoplasm. In terms of biological role, member of the two-component regulatory system BasS/BasR. BasR induces the transcription of the ugd, ais, arnBCADTEF and eptA-basRS loci, all involved in resistance to polymyxin. The polypeptide is Transcriptional regulatory protein BasR (basR) (Escherichia coli (strain K12)).